A 132-amino-acid polypeptide reads, in one-letter code: Outer membrane protein RomA (132 aa).

The protein to M.tuberculosis Rv0906.

The protein resides in the cell outer membrane. This Klebsiella pneumoniae protein is Outer membrane protein RomA (romA).